Here is a 303-residue protein sequence, read N- to C-terminus: DCN1-like protein 3 (303 aa).

Disordered regions lie at residues 1–41 (MGQC…HLSI) and 62–83 (EASQPLAAGGDTKKKEQGTGAE). Glycine 2 carries N-myristoyl glycine lipidation. The DCUN1 domain maps to 85–277 (SSVQRIEELF…LFDTFVEWEM (193 aa)). The interval 284 to 303 (EETKCIPCSGTDDQSTEGQT) is disordered. Residues 294 to 303 (TDDQSTEGQT) show a composition bias toward polar residues.

In terms of assembly, may interact (via the DCUN1 domain) with unneddylated cullins.

The protein resides in the cell membrane. The protein localises to the cytoplasm. It localises to the nucleus. It is found in the perinuclear region. Contributes to the neddylation of all cullins by transferring NEDD8 from N-terminally acetylated NEDD8-conjugating E2s enzyme to different cullin C-terminal domain-RBX complexes. At the cell membrane, can promote and as well inhibit cullins neddylation. This is DCN1-like protein 3 from Xenopus tropicalis (Western clawed frog).